A 122-amino-acid chain; its full sequence is Large ribosomal subunit protein bL12 (122 aa).

The protein belongs to the bacterial ribosomal protein bL12 family. Homodimer. Part of the ribosomal stalk of the 50S ribosomal subunit. Forms a multimeric L10(L12)X complex, where L10 forms an elongated spine to which 2 to 4 L12 dimers bind in a sequential fashion. Binds GTP-bound translation factors.

Functionally, forms part of the ribosomal stalk which helps the ribosome interact with GTP-bound translation factors. Is thus essential for accurate translation. This chain is Large ribosomal subunit protein bL12, found in Pseudomonas aeruginosa (strain LESB58).